The following is an 86-amino-acid chain: Small ribosomal subunit protein bS18c (86 aa).

This sequence belongs to the bacterial ribosomal protein bS18 family. In terms of assembly, part of the 30S ribosomal subunit.

Its subcellular location is the plastid. The protein localises to the chloroplast. In Pseudotsuga menziesii (Douglas-fir), this protein is Small ribosomal subunit protein bS18c.